Reading from the N-terminus, the 273-residue chain is MLKLLLLTLPLLSSLVHAAPGPAMTREGIVGGQEAHGNKWPWQVSLRANDTYWMHFCGGSLIHPQWVLTAAHCVGPDVADPNKVRVQLRKQYLYYHDHLMTVSQIITHPDFYIVQDGADIALLKLTNPVNISDYVHPVPLPPASETFPSGTLCWVTGWGNIDNGVNLPPPFPLKEVQVPIIENHLCDLKYHKGLITGDNVHIVRDDMLCAGNEGHDSCQGDSGGPLVCKVEDTWLQAGVVSWGEGCAQPNRPGIYTRVTYYLDWIHHYVPKDF.

The N-terminal stretch at 1–18 is a signal peptide; the sequence is MLKLLLLTLPLLSSLVHA. Residues 19–28 constitute a propeptide, activation peptide; the sequence is APGPAMTREG. Positions 29 to 270 constitute a Peptidase S1 domain; that stretch reads IVGGQEAHGN…YLDWIHHYVP (242 aa). Asn49 is a glycosylation site (N-linked (GlcNAc...) asparagine). The cysteines at positions 57 and 73 are disulfide-linked. Catalysis depends on charge relay system residues His72 and Asp119. The N-linked (GlcNAc...) asparagine glycan is linked to Asn130. 3 disulfide bridges follow: Cys153-Cys228, Cys186-Cys209, and Cys218-Cys246. The active-site Charge relay system is Ser222.

The protein belongs to the peptidase S1 family. Tryptase subfamily.

It carries out the reaction Preferential cleavage: Arg-|-Xaa, Lys-|-Xaa, but with more restricted specificity than trypsin.. Functionally, tryptase is the major neutral protease present in mast cells and is secreted upon the coupled activation-degranulation response of this cell type. May play a role in innate immunity. The protein is Tryptase (Tpsab1) of Mus musculus (Mouse).